The chain runs to 72 residues: Enterobactin biosynthesis protein YbdZ (72 aa).

The protein belongs to the MbtH-like family.

Involved in the biosynthesis of the siderophore enterobactin (enterochelin), which is a macrocyclic trimeric lactone of N-(2,3-dihydroxybenzoyl)-serine. Plays a role in the catalytic function of EntF. It is required for adenylation of amino acids in non-ribosomal peptide biosynthesis. The chain is Enterobactin biosynthesis protein YbdZ from Escherichia coli (strain K12).